Reading from the N-terminus, the 583-residue chain is uncharacterized protein (583 aa).

This is an uncharacterized protein from Sinorhizobium fredii (strain NBRC 101917 / NGR234).